Reading from the N-terminus, the 233-residue chain is Uracil-DNA glycosylase (233 aa).

The active-site Proton acceptor is the D70.

The protein belongs to the uracil-DNA glycosylase (UDG) superfamily. UNG family.

The protein resides in the cytoplasm. The enzyme catalyses Hydrolyzes single-stranded DNA or mismatched double-stranded DNA and polynucleotides, releasing free uracil.. In terms of biological role, excises uracil residues from the DNA which can arise as a result of misincorporation of dUMP residues by DNA polymerase or due to deamination of cytosine. This is Uracil-DNA glycosylase from Helicobacter pylori (strain HPAG1).